Consider the following 363-residue polypeptide: NADH-quinone oxidoreductase subunit H (363 aa).

Transmembrane regions (helical) follow at residues 29–49, 62–82, 96–116, 127–147, 163–183, 202–222, 238–257, 264–286, 299–319, and 339–359; these read VLKILLIAVPVIVSVAFYVVW, GPMYVGMGIFQAFADVFKLLF, FIIAPLLTLAPAFAAWSVVPF, VGLLYLLAMTSLGVYGIILAG, AAQVVSYEIAMGFALVGVMIA, FFDWFLIPLFPLFIVYWVSGV, EIVAGHMVEYSGGAFALFFL, ILVSFLISIFFLGGWLSPIQGWV, KGGWPWLLMKVFFFASAYIWF, and FIPLTIVWIAVTALMVFYGVI.

The protein belongs to the complex I subunit 1 family. In terms of assembly, NDH-1 is composed of 14 different subunits. Subunits NuoA, H, J, K, L, M, N constitute the membrane sector of the complex.

It localises to the cell inner membrane. The enzyme catalyses a quinone + NADH + 5 H(+)(in) = a quinol + NAD(+) + 4 H(+)(out). In terms of biological role, NDH-1 shuttles electrons from NADH, via FMN and iron-sulfur (Fe-S) centers, to quinones in the respiratory chain. The immediate electron acceptor for the enzyme in this species is believed to be ubiquinone. Couples the redox reaction to proton translocation (for every two electrons transferred, four hydrogen ions are translocated across the cytoplasmic membrane), and thus conserves the redox energy in a proton gradient. This subunit may bind ubiquinone. This is NADH-quinone oxidoreductase subunit H from Xanthomonas oryzae pv. oryzae (strain PXO99A).